A 353-amino-acid chain; its full sequence is Photosystem II protein D1 (353 aa).

An N-acetylthreonine modification is found at Thr2. Residue Thr2 is modified to Phosphothreonine. The next 3 helical transmembrane spans lie at 29–46, 118–133, and 142–156; these read YIGW…TATS, HFLL…EWEL, and WIAV…AATA. A chlorophyll a-binding site is contributed by His118. A pheophytin a-binding site is contributed by Tyr126. The [CaMn4O5] cluster site is built by Asp170 and Glu189. A helical membrane pass occupies residues 197-218; sequence FHMLGVAGVFGGSLFSAMHGSL. His198 contributes to the chlorophyll a binding site. A quinone-binding positions include His215 and 264 to 265; that span reads SF. His215 is a Fe cation binding site. His272 is a binding site for Fe cation. Residues 274–288 traverse the membrane as a helical segment; it reads FLTAWPVVGIWFTAL. Residues His332, Glu333, Asp342, and Ala344 each contribute to the [CaMn4O5] cluster site. Positions 345 to 353 are excised as a propeptide; the sequence is VVEAPSTNG.

It belongs to the reaction center PufL/M/PsbA/D family. In terms of assembly, PSII is composed of 1 copy each of membrane proteins PsbA, PsbB, PsbC, PsbD, PsbE, PsbF, PsbH, PsbI, PsbJ, PsbK, PsbL, PsbM, PsbT, PsbX, PsbY, PsbZ, Psb30/Ycf12, at least 3 peripheral proteins of the oxygen-evolving complex and a large number of cofactors. It forms dimeric complexes. The D1/D2 heterodimer binds P680, chlorophylls that are the primary electron donor of PSII, and subsequent electron acceptors. It shares a non-heme iron and each subunit binds pheophytin, quinone, additional chlorophylls, carotenoids and lipids. D1 provides most of the ligands for the Mn4-Ca-O5 cluster of the oxygen-evolving complex (OEC). There is also a Cl(-1) ion associated with D1 and D2, which is required for oxygen evolution. The PSII complex binds additional chlorophylls, carotenoids and specific lipids. is required as a cofactor. In terms of processing, tyr-161 forms a radical intermediate that is referred to as redox-active TyrZ, YZ or Y-Z. Post-translationally, C-terminally processed by CTPA; processing is essential to allow assembly of the oxygen-evolving complex and thus photosynthetic growth.

It is found in the plastid. The protein localises to the chloroplast thylakoid membrane. The enzyme catalyses 2 a plastoquinone + 4 hnu + 2 H2O = 2 a plastoquinol + O2. Its function is as follows. Photosystem II (PSII) is a light-driven water:plastoquinone oxidoreductase that uses light energy to abstract electrons from H(2)O, generating O(2) and a proton gradient subsequently used for ATP formation. It consists of a core antenna complex that captures photons, and an electron transfer chain that converts photonic excitation into a charge separation. The D1/D2 (PsbA/PsbD) reaction center heterodimer binds P680, the primary electron donor of PSII as well as several subsequent electron acceptors. The protein is Photosystem II protein D1 of Aethionema cordifolium (Lebanon stonecress).